A 226-amino-acid chain; its full sequence is Protein DEHYDRATION-INDUCED 19 (226 aa).

The interval 158-208 is disordered; that stretch reads FPTSDTEETSKPPISIPDDASVIKETPAQPWDSSIDSSLTREEREQKRKQA. Residues 196-205 show a composition bias toward basic and acidic residues; it reads LTREEREQKR.

Belongs to the Di19 family.

The protein is Protein DEHYDRATION-INDUCED 19 (DI19-1) of Oryza sativa subsp. japonica (Rice).